The chain runs to 64 residues: Large ribosomal subunit protein bL35 (64 aa).

Basic residues predominate over residues 1–14; it reads MKQKTHKGAAKRIK. The disordered stretch occupies residues 1–50; sequence MKQKTHKGAAKRIKISGSGKLRREQANRRHLLEGKPSKRTRRLKGTEDVA. Positions 21–36 are enriched in basic and acidic residues; sequence LRREQANRRHLLEGKP.

Belongs to the bacterial ribosomal protein bL35 family.

The sequence is that of Large ribosomal subunit protein bL35 from Corynebacterium jeikeium (strain K411).